The sequence spans 301 residues: Probable alpha-L-glutamate ligase (301 aa).

Positions 104-287 (LQLLSRRGVG…IASQIIAFIE (184 aa)) constitute an ATP-grasp domain. ATP-binding positions include lysine 141, 178–179 (EF), aspartate 187, and 211–213 (RSN). Mg(2+) contacts are provided by aspartate 248, glutamate 260, and asparagine 262. Mn(2+)-binding residues include aspartate 248, glutamate 260, and asparagine 262.

This sequence belongs to the RimK family. Mg(2+) is required as a cofactor. The cofactor is Mn(2+).

In Hydrogenovibrio crunogenus (strain DSM 25203 / XCL-2) (Thiomicrospira crunogena), this protein is Probable alpha-L-glutamate ligase.